The following is a 141-amino-acid chain: HTH-type transcriptional regulator LrpA (141 aa).

An HTH asnC-type domain is found at Ile-2–Ser-63. The H-T-H motif DNA-binding region spans Phe-21–Lys-40.

As to quaternary structure, homooctamer; tetramer of dimers.

DNA-binding protein that negatively regulates its own transcription. Interferes with RNA polymerase (RNAP) recruitment by inhibiting the association of RNAP with the TBP-TFB promoter complex. The polypeptide is HTH-type transcriptional regulator LrpA (lrpA) (Pyrococcus horikoshii (strain ATCC 700860 / DSM 12428 / JCM 9974 / NBRC 100139 / OT-3)).